Reading from the N-terminus, the 308-residue chain is Cell division protein FtsX (308 aa).

The Extracellular portion of the chain corresponds to 1–24 (MISRFFRHLFEALKSLKRNGWMTV). A helical transmembrane segment spans residues 25–45 (AAVSSVMITLTLVAIFASVIF). Residues 46–178 (NTAKLATDIE…NTERLFKLAS (133 aa)) lie on the Cytoplasmic side of the membrane. A helical transmembrane segment spans residues 179–199 (FIRVWGLGIAALLIFIAAFLI). The Extracellular portion of the chain corresponds to 200 to 236 (SNTIRITIISRSREIQIMRLVGAKNSYIRGPFLLEGA). A helical membrane pass occupies residues 237 to 257 (FIGLLGAIAPSVLVFIVYQIV). Topologically, residues 258-276 (YQSVNKSLVGQNLSMISPD) are cytoplasmic. A helical membrane pass occupies residues 277–297 (LFSPLMIALLFVIGVFIGSLG). Topologically, residues 298-308 (SGISMRRFLKI) are extracellular.

Belongs to the ABC-4 integral membrane protein family. FtsX subfamily. As to quaternary structure, interacts with FtsE. Interacts (via large extracellular loop) with PcsB (via N-terminal coiled coil domain). This interaction directs PcsB to equatorial and septal sites of dividing cells.

It localises to the cell membrane. In terms of biological role, part of the ABC transporter FtsEX involved in asymmetric cellular division facilitating the initiation of sporulation. Required in maintaining normal growth and cellular morphology. The sequence is that of Cell division protein FtsX from Streptococcus pneumoniae (strain ATCC BAA-255 / R6).